Here is a 264-residue protein sequence, read N- to C-terminus: TLC domain-containing protein 4-B (264 aa).

Transmembrane regions (helical) follow at residues V6 to V26, L50 to D70, L84 to A104, M110 to L130, L169 to M189, and L210 to W230. Residues N41 to T243 form the TLC domain.

The protein belongs to the TLCD4 family.

It is found in the membrane. In Danio rerio (Zebrafish), this protein is TLC domain-containing protein 4-B (tlcd4b).